The chain runs to 251 residues: Indole-3-glycerol phosphate synthase (251 aa).

Over residues 1–12 the composition is skewed to polar residues; that stretch reads MDDSSSLASPVQ. The segment at 1 to 27 is disordered; it reads MDDSSSLASPVQSILAAARRRDPPTRR.

The protein belongs to the TrpC family.

It carries out the reaction 1-(2-carboxyphenylamino)-1-deoxy-D-ribulose 5-phosphate + H(+) = (1S,2R)-1-C-(indol-3-yl)glycerol 3-phosphate + CO2 + H2O. It functions in the pathway amino-acid biosynthesis; L-tryptophan biosynthesis; L-tryptophan from chorismate: step 4/5. This is Indole-3-glycerol phosphate synthase from Halobacterium salinarum (strain ATCC 700922 / JCM 11081 / NRC-1) (Halobacterium halobium).